Consider the following 969-residue polypeptide: Bifunctional glutamine synthetase adenylyltransferase/adenylyl-removing enzyme (969 aa).

An adenylyl removase region spans residues 1–456 (MNWQANIHKL…HFEQLFAAPH (456 aa)). An adenylyl transferase region spans residues 466 to 969 (EKRLAEVWLG…SALLEDESAK (504 aa)).

Belongs to the GlnE family. Mg(2+) serves as cofactor.

The catalysed reaction is [glutamine synthetase]-O(4)-(5'-adenylyl)-L-tyrosine + phosphate = [glutamine synthetase]-L-tyrosine + ADP. It catalyses the reaction [glutamine synthetase]-L-tyrosine + ATP = [glutamine synthetase]-O(4)-(5'-adenylyl)-L-tyrosine + diphosphate. In terms of biological role, involved in the regulation of glutamine synthetase GlnA, a key enzyme in the process to assimilate ammonia. When cellular nitrogen levels are high, the C-terminal adenylyl transferase (AT) inactivates GlnA by covalent transfer of an adenylyl group from ATP to specific tyrosine residue of GlnA, thus reducing its activity. Conversely, when nitrogen levels are low, the N-terminal adenylyl removase (AR) activates GlnA by removing the adenylyl group by phosphorolysis, increasing its activity. The regulatory region of GlnE binds the signal transduction protein PII (GlnB) which indicates the nitrogen status of the cell. This Nitrosococcus oceani (strain ATCC 19707 / BCRC 17464 / JCM 30415 / NCIMB 11848 / C-107) protein is Bifunctional glutamine synthetase adenylyltransferase/adenylyl-removing enzyme.